Reading from the N-terminus, the 321-residue chain is tRNA(Ile)-lysidine synthase (321 aa).

30-35 is a binding site for ATP; sequence SGGSDS.

This sequence belongs to the tRNA(Ile)-lysidine synthase family.

Its subcellular location is the cytoplasm. It carries out the reaction cytidine(34) in tRNA(Ile2) + L-lysine + ATP = lysidine(34) in tRNA(Ile2) + AMP + diphosphate + H(+). Functionally, ligates lysine onto the cytidine present at position 34 of the AUA codon-specific tRNA(Ile) that contains the anticodon CAU, in an ATP-dependent manner. Cytidine is converted to lysidine, thus changing the amino acid specificity of the tRNA from methionine to isoleucine. This is tRNA(Ile)-lysidine synthase from Chlamydia trachomatis serovar A (strain ATCC VR-571B / DSM 19440 / HAR-13).